A 338-amino-acid chain; its full sequence is Ketol-acid reductoisomerase (NADP(+)) (338 aa).

The 181-residue stretch at 1–181 folds into the KARI N-terminal Rossmann domain; that stretch reads MKVFYDKDCD…GGGKAGIIET (181 aa). NADP(+)-binding positions include 24 to 27, arginine 47, and serine 52; that span reads YGSQ. Residue histidine 107 is part of the active site. Glycine 133 contacts NADP(+). Positions 182 to 327 constitute a KARI C-terminal knotted domain; it reads NFKEETETDL…AQLRAMMPWI (146 aa). Mg(2+)-binding residues include aspartate 190, glutamate 194, glutamate 226, and glutamate 230. Serine 251 provides a ligand contact to substrate.

Belongs to the ketol-acid reductoisomerase family. Requires Mg(2+) as cofactor.

It catalyses the reaction (2R)-2,3-dihydroxy-3-methylbutanoate + NADP(+) = (2S)-2-acetolactate + NADPH + H(+). The catalysed reaction is (2R,3R)-2,3-dihydroxy-3-methylpentanoate + NADP(+) = (S)-2-ethyl-2-hydroxy-3-oxobutanoate + NADPH + H(+). It participates in amino-acid biosynthesis; L-isoleucine biosynthesis; L-isoleucine from 2-oxobutanoate: step 2/4. It functions in the pathway amino-acid biosynthesis; L-valine biosynthesis; L-valine from pyruvate: step 2/4. In terms of biological role, involved in the biosynthesis of branched-chain amino acids (BCAA). Catalyzes an alkyl-migration followed by a ketol-acid reduction of (S)-2-acetolactate (S2AL) to yield (R)-2,3-dihydroxy-isovalerate. In the isomerase reaction, S2AL is rearranged via a Mg-dependent methyl migration to produce 3-hydroxy-3-methyl-2-ketobutyrate (HMKB). In the reductase reaction, this 2-ketoacid undergoes a metal-dependent reduction by NADPH to yield (R)-2,3-dihydroxy-isovalerate. The sequence is that of Ketol-acid reductoisomerase (NADP(+)) from Acidovorax ebreus (strain TPSY) (Diaphorobacter sp. (strain TPSY)).